Reading from the N-terminus, the 355-residue chain is Tyrosine recombinase XerC (355 aa).

The Core-binding (CB) domain maps to 4–89 (TQFDGDIDSF…AVRGFFAWAY (86 aa)). Residues 137 to 181 (KDDGGAAAAPGSGKAAGKTADKSADTVNRSEAPARADKRDNARVT) form a disordered region. The span at 141-154 (GAAAAPGSGKAAGK) shows a compositional bias: low complexity. The Tyr recombinase domain occupies 158–349 (KSADTVNRSE…SIEQLKNRYG (192 aa)). Residues 168–178 (APARADKRDNA) are compositionally biased toward basic and acidic residues. Active-site residues include Arg200, Lys224, His301, Arg304, and His327. The O-(3'-phospho-DNA)-tyrosine intermediate role is filled by Tyr336.

It belongs to the 'phage' integrase family. XerC subfamily. In terms of assembly, forms a cyclic heterotetrameric complex composed of two molecules of XerC and two molecules of XerD.

The protein resides in the cytoplasm. Functionally, site-specific tyrosine recombinase, which acts by catalyzing the cutting and rejoining of the recombining DNA molecules. The XerC-XerD complex is essential to convert dimers of the bacterial chromosome into monomers to permit their segregation at cell division. It also contributes to the segregational stability of plasmids. The sequence is that of Tyrosine recombinase XerC from Bifidobacterium longum (strain DJO10A).